The chain runs to 311 residues: Long form salivary protein D7L1 (311 aa).

The signal sequence occupies residues 1–21 (MIVTGVLLFILLELFAQGSQA). Cystine bridges form between Cys-37-Cys-73, Cys-69-Cys-128, Cys-178-Cys-211, and Cys-252-Cys-263.

It belongs to the PBP/GOBP family.

The protein resides in the secreted. In terms of biological role, modulates blood feeding of female mosquitoes on vertebrate species by binding and sequestering different mediators involved in the host response. Binds leukotriene C4 and U-46619, a stable analog of thromboxane A2. Inhibits agonist-induced platelet aggregation. Exhibits vasodilating activity. This chain is Long form salivary protein D7L1, found in Anopheles gambiae (African malaria mosquito).